We begin with the raw amino-acid sequence, 1179 residues long: MARRSQSSSQGDNPLAPGYLPPHYKEYYRLAVDALAEGGSEAYSRFLATEGAPDFLCPEELEHVSRHLRPPQYVTREPPEGSLLDVDMDGSSGTYWPVNSDQAVPELDLGWPLTFGFQGTEVTTLVQPPPPDSPSIKDEARRMIRSAQQVVAVVMDMFTDVDLLSEVLEAAARRVPVYILLDEMNAQHFLDMADKCRVNLQHVDFLRVRTVAGPTYYCRTGKSFKGHVKEKFLLVDCAVVMSGSYSFMWSFEKIHRSLAHVFQGELVSSFDEEFRILFAQSEPLVPSAAALARMDAYALAPYAGAGPLVGVPGVGAPTPFSFPKRAHLLFPPPREEGLGFPSFLDPDRHFLSAFRREEPPRMPGGALEPHAGLRPLSRRLEAEAGPAGELAGARGFFQARHLEMDAFKRHSFATEGAGAVENFAAARQVSRQTFLSHGDDFRFQTSHFHRDQLYQQQYQWDPQLTPARPQGLFEKLRGGRAGFADPDDFTLGAGPRFPELGPDGHQRLDYVPSSASREVRHGSDPAFAPGPRGLEPSGAPRPNLTQRFPCQAAARPGPDPAPEAEPERRGGPEGRAGLRRWRLASYLSGCHGEDGGDDGLPAPMEAEAYEDDVLAPGGRAPAGDLLPSAFRVPAAFPTKVPVPGPGSGGNGPEREGPEEPGLAKQDSFRSRLNPLVQRSSRLRSSLIFSTSQAEGAAGAAAATEKVQLLHKEQTVSETLGPGGEAVRSAASTKVAELLEKYKGPARDPGGGAGAITVASHSKAVVSQAWREEVAAPGAVGGERRSLESCLLDLRDSFAQQLHQEAERQPGAASLTAAQLLDTLGRSGSDRLPSRFLSAQSHSTSPQGLDSPLPLEGSGAHQVLHNESKGSPTSAYPERKGSPTPGFSTRRGSPTTGFIEQKGSPTSAYPERRGSPVPPVPERRSSPVPPVPERRGSLTLTISGESPKAGPAEEGPSGPMEVLRKGSLRLRQLLSPKGERRMEDEGGFPVPQENGQPESPRRLSLGQGDSTEAATEERGPRARLSSATANALYSSNLRDDTKAILEQISAHGQKHRAVPAPSPGPTHNSPELGRPPAAGVLAPDMSDKDKCSAIFRSDSLGTQGRLSRTLPASAEERDRLLRRMESMRKEKRVYSRFEVFCKKEEASSPGAGEGPAEEGTRDSKVGKFVPKILGTFKSKK.

Positions 1 to 286 (MARRSQSSSQ…LFAQSEPLVP (286 aa)) are DUF1669. Residues 1–286 (MARRSQSSSQ…LFAQSEPLVP (286 aa)) are mediates interaction with CSNK1A1 and is required for FAM83H activity in keratin cytoskeleton organization. At threonine 465 the chain carries Phosphothreonine. Disordered regions lie at residues 484-577 (ADPD…GRAG) and 636-669 (FPTK…DSFR). A phosphoserine mark is found at serine 513, serine 514, serine 516, serine 523, serine 647, and serine 667. Threonine 756 is modified (phosphothreonine). Phosphoserine is present on residues serine 759, serine 785, and serine 813. A disordered region spans residues 830-1026 (RLPSRFLSAQ…RGPRARLSSA (197 aa)). Residues 836-847 (LSAQSHSTSPQG) are compositionally biased toward polar residues. Phosphoserine is present on residues serine 870 and serine 881. Threonine 883 carries the post-translational modification Phosphothreonine. The segment covering 884–906 (PGFSTRRGSPTTGFIEQKGSPTS) has biased composition (polar residues). Serine 892 is subject to Phosphoserine. A Phosphothreonine modification is found at threonine 894. Phosphoserine occurs at positions 903, 914, 925, 936, 945, 1003, 1009, 1024, and 1025. Residue threonine 1040 is modified to Phosphothreonine. Disordered regions lie at residues 1047–1084 (ISAH…APDM) and 1143–1165 (EEAS…SKVG). Phosphoserine occurs at positions 1048, 1068, and 1147.

The protein belongs to the FAM83 family. In terms of assembly, directly interacts (via DUF1669) with casein kinase isoforms CSNK1A1, CSNK1A1L, CSNK1D and CSNK1E. Interaction with CSNK1A1 recruits CSNK1A1 to keratin filaments. Interacts with KRT18 and probably other keratins. As to expression, expressed in the tooth follicle.

The protein resides in the cytoplasm. It localises to the cytoskeleton. Functionally, may play a major role in the structural organization and calcification of developing enamel. May play a role in keratin cytoskeleton disassembly by recruiting CSNK1A1 to keratin filaments. Thereby, it may regulate epithelial cell migration. The chain is Protein FAM83H from Homo sapiens (Human).